A 131-amino-acid polypeptide reads, in one-letter code: Phosphoribosyl-AMP cyclohydrolase (131 aa).

Asp-78 serves as a coordination point for Mg(2+). Position 79 (Cys-79) interacts with Zn(2+). Mg(2+) contacts are provided by Asp-80 and Asp-82. The Zn(2+) site is built by Cys-96 and Cys-103.

This sequence belongs to the PRA-CH family. As to quaternary structure, homodimer. Mg(2+) is required as a cofactor. Requires Zn(2+) as cofactor.

The protein localises to the cytoplasm. The enzyme catalyses 1-(5-phospho-beta-D-ribosyl)-5'-AMP + H2O = 1-(5-phospho-beta-D-ribosyl)-5-[(5-phospho-beta-D-ribosylamino)methylideneamino]imidazole-4-carboxamide. Its pathway is amino-acid biosynthesis; L-histidine biosynthesis; L-histidine from 5-phospho-alpha-D-ribose 1-diphosphate: step 3/9. Its function is as follows. Catalyzes the hydrolysis of the adenine ring of phosphoribosyl-AMP. This Neisseria meningitidis serogroup A / serotype 4A (strain DSM 15465 / Z2491) protein is Phosphoribosyl-AMP cyclohydrolase.